Reading from the N-terminus, the 88-residue chain is Putative membrane protein insertion efficiency factor (88 aa).

The protein belongs to the UPF0161 family.

Its subcellular location is the cell inner membrane. Its function is as follows. Could be involved in insertion of integral membrane proteins into the membrane. The polypeptide is Putative membrane protein insertion efficiency factor (Rickettsia canadensis (strain McKiel)).